A 163-amino-acid chain; its full sequence is Nucleotide-binding protein NTHI1194 (163 aa).

Belongs to the YajQ family.

Its function is as follows. Nucleotide-binding protein. The sequence is that of Nucleotide-binding protein NTHI1194 from Haemophilus influenzae (strain 86-028NP).